We begin with the raw amino-acid sequence, 23 residues long: Potassium channel toxin alpha-KTx 13.4 (23 aa).

Disulfide bonds link cysteine 2-cysteine 15, cysteine 5-cysteine 20, and cysteine 9-cysteine 22. Residues 13–20 form an interaction with Ca(2+)-activated K(+) channels region; the sequence is GKCINGKC. Residue tyrosine 23 is modified to Tyrosine amide.

Expressed by the venom gland.

Its subcellular location is the secreted. In terms of biological role, blocks the potassium channel Shaker B. The polypeptide is Potassium channel toxin alpha-KTx 13.4 (Tityus stigmurus (Brazilian scorpion)).